Here is a 139-residue protein sequence, read N- to C-terminus: D-ribose pyranase (139 aa).

Histidine 20 functions as the Proton donor in the catalytic mechanism. Substrate contacts are provided by residues aspartate 28, histidine 106, and 128–130 (YAN).

Belongs to the RbsD / FucU family. RbsD subfamily. In terms of assembly, homodecamer.

It localises to the cytoplasm. It carries out the reaction beta-D-ribopyranose = beta-D-ribofuranose. It participates in carbohydrate metabolism; D-ribose degradation; D-ribose 5-phosphate from beta-D-ribopyranose: step 1/2. Functionally, catalyzes the interconversion of beta-pyran and beta-furan forms of D-ribose. This is D-ribose pyranase from Vibrio parahaemolyticus serotype O3:K6 (strain RIMD 2210633).